We begin with the raw amino-acid sequence, 379 residues long: DNA replication and repair protein RecF (379 aa).

ATP is bound at residue 30–37; the sequence is GDNAQGKS.

It belongs to the RecF family.

It localises to the cytoplasm. Functionally, the RecF protein is involved in DNA metabolism; it is required for DNA replication and normal SOS inducibility. RecF binds preferentially to single-stranded, linear DNA. It also seems to bind ATP. This Thermosynechococcus vestitus (strain NIES-2133 / IAM M-273 / BP-1) protein is DNA replication and repair protein RecF.